The chain runs to 424 residues: Glutamyl-tRNA reductase (424 aa).

Residues 49–52, Ser105, 110–112, and Gln116 each bind substrate; these read TCNR and EPQ. Residue Cys50 is the Nucleophile of the active site. An NADP(+)-binding site is contributed by 185–190; that stretch reads GSGETA.

Belongs to the glutamyl-tRNA reductase family. In terms of assembly, homodimer.

It catalyses the reaction (S)-4-amino-5-oxopentanoate + tRNA(Glu) + NADP(+) = L-glutamyl-tRNA(Glu) + NADPH + H(+). The protein operates within porphyrin-containing compound metabolism; protoporphyrin-IX biosynthesis; 5-aminolevulinate from L-glutamyl-tRNA(Glu): step 1/2. Catalyzes the NADPH-dependent reduction of glutamyl-tRNA(Glu) to glutamate 1-semialdehyde (GSA). This is Glutamyl-tRNA reductase from Legionella pneumophila (strain Corby).